We begin with the raw amino-acid sequence, 53 residues long: Large ribosomal subunit protein bL32c (53 aa).

Residues 1 to 21 (MAVPKKRTSKSKKKSRRSHWI) are disordered.

Belongs to the bacterial ribosomal protein bL32 family.

It localises to the plastid. The protein resides in the chloroplast. This chain is Large ribosomal subunit protein bL32c (rpl32), found in Cyanidium caldarium (Red alga).